The primary structure comprises 234 residues: MNPDLNMNPHDSGRTDPYAPELGEIATDEGDGENVTKTGTTTVGLATEEGVVIATDRRASLGGRFVSNKNVVKVEEIHPTAAMTLVGSVGGAQSFIRTLRSEASLYETRRDEPMSINALATLAGNFARGGPFLAIHPILGGVDDEGSHVYTIDPAGGVMEDDYAVTGSGMQVAYGTIEGEYESDLSTEEAKELATNAVQAASERDTGSGNGLVIAEITDEGVEIEEFDDLADAL.

The interval 1–35 (MNPDLNMNPHDSGRTDPYAPELGEIATDEGDGENV) is disordered. Positions 1 to 39 (MNPDLNMNPHDSGRTDPYAPELGEIATDEGDGENVTKTG) are cleaved as a propeptide — removed in mature form; by autocatalysis. The active-site Nucleophile is Thr-40.

This sequence belongs to the peptidase T1B family. As to quaternary structure, the 20S proteasome core is composed of 14 alpha and 14 beta subunits that assemble into four stacked heptameric rings, resulting in a barrel-shaped structure. The two inner rings, each composed of seven catalytic beta subunits, are sandwiched by two outer rings, each composed of seven alpha subunits. The catalytic chamber with the active sites is on the inside of the barrel. Has a gated structure, the ends of the cylinder being occluded by the N-termini of the alpha-subunits. Is capped at one or both ends by the proteasome regulatory ATPase, PAN.

The protein localises to the cytoplasm. It catalyses the reaction Cleavage of peptide bonds with very broad specificity.. With respect to regulation, the formation of the proteasomal ATPase PAN-20S proteasome complex, via the docking of the C-termini of PAN into the intersubunit pockets in the alpha-rings, triggers opening of the gate for substrate entry. Interconversion between the open-gate and close-gate conformations leads to a dynamic regulation of the 20S proteasome proteolysis activity. Functionally, component of the proteasome core, a large protease complex with broad specificity involved in protein degradation. The polypeptide is Proteasome subunit beta (Halorhabdus utahensis (strain DSM 12940 / JCM 11049 / AX-2)).